A 207-amino-acid chain; its full sequence is LexA repressor (207 aa).

A DNA-binding region (H-T-H motif) is located at residues 29-49 (VREICSAVDLSSTSTVHGHLA). Active-site for autocatalytic cleavage activity residues include Ser128 and Lys166.

The protein belongs to the peptidase S24 family. As to quaternary structure, homodimer.

It catalyses the reaction Hydrolysis of Ala-|-Gly bond in repressor LexA.. Represses a number of genes involved in the response to DNA damage (SOS response), including recA and lexA. In the presence of single-stranded DNA, RecA interacts with LexA causing an autocatalytic cleavage which disrupts the DNA-binding part of LexA, leading to derepression of the SOS regulon and eventually DNA repair. The polypeptide is LexA repressor (Lactobacillus gasseri (strain ATCC 33323 / DSM 20243 / BCRC 14619 / CIP 102991 / JCM 1131 / KCTC 3163 / NCIMB 11718 / NCTC 13722 / AM63)).